Here is a 366-residue protein sequence, read N- to C-terminus: Type 2 DNA topoisomerase 6 subunit A (366 aa).

The Topo IIA-type catalytic domain maps to Ser7–Ala146. The active-site O-(5'-phospho-DNA)-tyrosine intermediate is Tyr101. Mg(2+) contacts are provided by Glu199 and Asp251.

Belongs to the TOP6A family. In terms of assembly, homodimer. Heterotetramer of two Top6A and two Top6B chains. Mg(2+) is required as a cofactor.

It catalyses the reaction ATP-dependent breakage, passage and rejoining of double-stranded DNA.. Relaxes both positive and negative superturns and exhibits a strong decatenase activity. The chain is Type 2 DNA topoisomerase 6 subunit A from Halobacterium salinarum (strain ATCC 700922 / JCM 11081 / NRC-1) (Halobacterium halobium).